A 534-amino-acid polypeptide reads, in one-letter code: Signal recognition particle subunit SRP54 (534 aa).

Residues 1 to 296 (MVLQDLGRRI…EPKAFIQKLL (296 aa)) form a G-domain region. GTP is bound by residues 109–116 (GLQGAGKT), 191–195 (DTSGR), and 249–252 (TKTD). The M-domain stretch occupies residues 297-534 (GMGDMAGLVE…GGGGGRGRGR (238 aa)).

Belongs to the GTP-binding SRP family. SRP54 subfamily. Fungal signal recognition particle consists of a 7S RNA molecule (scR1) and at least six protein subunits: srp72, srp68, srpA/srp54, sec65, srp21 and srp14.

The protein resides in the cytoplasm. Its subcellular location is the endoplasmic reticulum. It catalyses the reaction GTP + H2O = GDP + phosphate + H(+). Signal-recognition-particle (SRP) assembly has a crucial role in targeting secretory proteins to the rough endoplasmic reticulum (ER) membrane. SRP is required for the cotranslational protein translocation for ER import and preferentially recognizes strongly hydrophobic signal sequences. It is involved in targeting the nascent chain-ribosome (RNC) complex to the ER and is proposed to participate in the arrest of nascent chain elongation during membrane targeting. srpA/srp54 binds to the signal sequence of presecretory protein when they emerge from the ribosomes. srpA/srp54 interacts with the scR1 RNA and mediates the association of the resulting SRP-RNC complex with the signal recognition particle receptor (SR) via its alpha subunit srp101. Both, srpA/srp54 and srp101, are locked in their GTP bound forms in the SRP-RNC-SR complex, which dissociates upon transferring the signal sequence to the protein-conducting channel (translocon). After signal sequence transfer, srpA/srp54 and srp101 act as reciprocal GTPase-activating proteins (GAPs), thereby resolving their association. This is Signal recognition particle subunit SRP54 (srpA) from Aspergillus niger.